The chain runs to 384 residues: uncharacterized protein (384 aa).

12 consecutive transmembrane segments (helical) span residues 22-42 (LAFF…PFAK), 52-72 (LGLL…LTGV), 81-101 (AVIL…VLMN), 106-126 (MAIA…AMNI), 143-163 (FHGL…ALLW), 164-184 (LGLN…ILLL), 202-222 (LFVF…VMFL), 240-260 (GMSP…MTLG), 276-296 (VLLG…SIDS), 299-319 (AAII…PILF), 327-347 (VMPA…GILA), and 352-372 (IGFI…ALLL).

Belongs to the major facilitator superfamily.

It localises to the membrane. This is an uncharacterized protein from Yersinia pestis.